Reading from the N-terminus, the 214-residue chain is Thioredoxin-like 4, chloroplastic (214 aa).

A compositionally biased stretch (low complexity) spans 1–20; the sequence is MITASLLPLPATSSSSGRRS. The segment at 1–68 is disordered; the sequence is MITASLLPLP…STNGSLPGLP (68 aa). A chloroplast-targeting transit peptide spans 1–71; sequence MITASLLPLP…GSLPGLPPVV (71 aa). Positions 21 to 34 are enriched in pro residues; it reads LPPPTTTFPRPPPP. The span at 42–53 shows a compositional bias: low complexity; it reads SSSSSSASSTES. The Thioredoxin domain occupies 72–199; that stretch reads VEEEEEEFCP…IIAAIQKYTA (128 aa). Active-site nucleophile residues include cysteine 117 and cysteine 120. Cysteine 117 and cysteine 120 are disulfide-bonded.

The protein belongs to the thioredoxin family.

The protein resides in the plastid. It localises to the chloroplast. In terms of biological role, probable thiol-disulfide oxidoreductase that may participate in various redox reactions. The sequence is that of Thioredoxin-like 4, chloroplastic from Oryza sativa subsp. japonica (Rice).